Reading from the N-terminus, the 371-residue chain is Flagellar P-ring protein (371 aa).

The N-terminal stretch at 1-21 is a signal peptide; it reads MSRSFFATVLGLALAAMTVMA.

Belongs to the FlgI family. The basal body constitutes a major portion of the flagellar organelle and consists of four rings (L,P,S, and M) mounted on a central rod.

It is found in the periplasm. Its subcellular location is the bacterial flagellum basal body. Functionally, assembles around the rod to form the L-ring and probably protects the motor/basal body from shearing forces during rotation. This chain is Flagellar P-ring protein, found in Caulobacter sp. (strain K31).